Consider the following 273-residue polypeptide: Alkaline ceramidase 1 (273 aa).

Topologically, residues 1–36 (MHVPGTRAKMSSIFAYQSSEVDWCESNFQHSELVAE) are lumenal. The Ca(2+) site is built by D22, W23, E25, N27, and E36. A helical transmembrane segment spans residues 37–57 (FYNTFSNVFFLIFGPLMMFLM). The Cytoplasmic segment spans residues 58-72 (HPYAQKRTRCFYGVS). 2 helical membrane-spanning segments follow: residues 73–93 (VLFM…SFLG) and 94–114 (QLLD…VWLP). Residue H86 coordinates Zn(2+). The Cytoplasmic portion of the chain corresponds to 115 to 126 (RCYFPKFVKGNR). Residues 127–147 (FYFSCLVTITTIISTFLTFVK) form a helical membrane-spanning segment. The Lumenal portion of the chain corresponds to 148-149 (PT). Residues 150–167 (VNAYALNSIAIHILYIVR) traverse the membrane as a helical segment. Topologically, residues 168 to 177 (TEYKKIRDDD) are cytoplasmic. The helical transmembrane segment at 178–198 (LRHLIAVSVVLWAAALTSWIS) threads the bilayer. Residues 199–215 (DRVLCSFWQRIHFYYLH) lie on the Lumenal side of the membrane. Residues H215 and H219 each coordinate Zn(2+). Residues 216–236 (SIWHVLISITFPYGIVTMALV) form a helical membrane-spanning segment. The Cytoplasmic portion of the chain corresponds to 237–273 (DAKYEMPDKTLKVHYWPRDSWVIGLPYVEIQENDKNC).

This sequence belongs to the alkaline ceramidase family. It depends on Zn(2+) as a cofactor. Highly expressed in skin. Weakly or not expressed in other tissues. Expressed by granular layer of interfollicular epidermis, sebaceous glands and infundibulum.

The protein localises to the endoplasmic reticulum membrane. The catalysed reaction is an N-acylsphing-4-enine + H2O = sphing-4-enine + a fatty acid. It catalyses the reaction N-tetracosanoyl-sphing-4-enine + H2O = tetracosanoate + sphing-4-enine. It carries out the reaction an N-acylsphinganine + H2O = sphinganine + a fatty acid. The enzyme catalyses N-(9Z-octadecenoyl)-sphing-4-enine + H2O = sphing-4-enine + (9Z)-octadecenoate. The catalysed reaction is N-(15Z-tetracosenoyl)-sphing-4-enine + H2O = (15Z)-tetracosenoate + sphing-4-enine. Its pathway is lipid metabolism; sphingolipid metabolism. Its activity is regulated as follows. Inhibited by sphingosine. Inhibited by Mn(2+), Zn(2+), and Cu(2+) in a dose-dependent manner. Slightly activated by Ca(2+) in a dose-dependent manner. In terms of biological role, endoplasmic reticulum ceramidase that catalyzes the hydrolysis of ceramides into sphingosine and free fatty acids at alkaline pH. Ceramides, sphingosine, and its phosphorylated form sphingosine-1-phosphate are bioactive lipids that mediate cellular signaling pathways regulating several biological processes including cell proliferation, apoptosis and differentiation. Exhibits a strong substrate specificity towards the natural stereoisomer of ceramides with D-erythro-sphingosine as a backbone and has a higher activity towards very long-chain unsaturated fatty acids like the C24:1-ceramide. May also hydrolyze dihydroceramides to produce dihydrosphingosine. ACER1 is a skin-specific ceramidase that regulates the levels of ceramides, sphingosine and sphingosine-1-phosphate in the epidermis, mediates the calcium-induced differentiation of epidermal keratinocytes and more generally plays an important role in skin homeostasis. The protein is Alkaline ceramidase 1 of Mus musculus (Mouse).